The sequence spans 223 residues: Probable glutathione S-transferase (223 aa).

In terms of domain architecture, GST N-terminal spans 2–81 (AEVKLLGFWY…YIDETFEGPS (80 aa)). Glutathione is bound by residues serine 12, lysine 39, valine 53, and 65 to 66 (ES). The GST C-terminal domain maps to 86 to 212 (DPYDRALARF…ELLAFFRARF (127 aa)).

This sequence belongs to the GST superfamily. HSP26 family. As to expression, root tip-specific expression.

The catalysed reaction is RX + glutathione = an S-substituted glutathione + a halide anion + H(+). The protein is Probable glutathione S-transferase of Nicotiana tabacum (Common tobacco).